A 396-amino-acid polypeptide reads, in one-letter code: Elongation factor Tu (396 aa).

In terms of domain architecture, tr-type G spans Lys10 to Arg207. Positions Gly19 to Thr26 are G1. A GTP-binding site is contributed by Gly19–Thr26. Thr26 is a binding site for Mg(2+). The segment at Gly60–Ser64 is G2. The tract at residues Asp81–Gly84 is G3. GTP contacts are provided by residues Asp81–His85 and Asn136–Asp139. The interval Asn136 to Asp139 is G4. The interval Ser174 to Leu176 is G5.

Belongs to the TRAFAC class translation factor GTPase superfamily. Classic translation factor GTPase family. EF-Tu/EF-1A subfamily. Monomer.

It is found in the cytoplasm. The enzyme catalyses GTP + H2O = GDP + phosphate + H(+). Its function is as follows. GTP hydrolase that promotes the GTP-dependent binding of aminoacyl-tRNA to the A-site of ribosomes during protein biosynthesis. The protein is Elongation factor Tu of Novosphingobium aromaticivorans (strain ATCC 700278 / DSM 12444 / CCUG 56034 / CIP 105152 / NBRC 16084 / F199).